Consider the following 495-residue polypeptide: Cytochrome P450 710A1 (495 aa).

Residues 5–25 form a helical membrane-spanning segment; that stretch reads VSIFASLAPYLISAFLLFLLV. Residue cysteine 434 participates in heme binding.

It belongs to the cytochrome P450 family. It depends on heme as a cofactor. Expressed in the vascular tissues of roots, shoots and leaves. Expressed in root tips and sepals. Very low expression in stems and siliques.

Its subcellular location is the membrane. It carries out the reaction 5-dehydroepisterol + NADPH + O2 + H(+) = ergosta-5,7,22,24(28)-tetraen-3beta-ol + NADP(+) + 2 H2O. The protein operates within steroid biosynthesis; sterol biosynthesis. Required to form the C-22 double bond in the sterol side chain. Possesses in vitro C-22 desaturase activity toward beta-sitosterol and produces stigmasterol. No activity with campesterol. The chain is Cytochrome P450 710A1 from Arabidopsis thaliana (Mouse-ear cress).